Here is a 342-residue protein sequence, read N- to C-terminus: Uricase (342 aa).

Residues Lys35 and Thr80 each act as charge relay system in the active site. The urate site is built by Thr80, Asp81, Phe204, Arg221, Val269, Gln270, and Asn296. His298 functions as the Charge relay system in the catalytic mechanism. The Microbody targeting signal motif lies at 340–342; it reads SHL.

This sequence belongs to the uricase family. Malpighian tubules.

Its subcellular location is the peroxisome. The catalysed reaction is urate + O2 + H2O = 5-hydroxyisourate + H2O2. Its pathway is purine metabolism; urate degradation; (S)-allantoin from urate: step 1/3. Its activity is regulated as follows. Repressed by 20-hydroxyecdysone. In terms of biological role, catalyzes the oxidation of uric acid to 5-hydroxyisourate, which is further processed to form (S)-allantoin. The polypeptide is Uricase (Uro) (Drosophila virilis (Fruit fly)).